A 447-amino-acid chain; its full sequence is MTRFDENARSPWTPLHDVKTVELFPLNQRLDGSITLPGSKSLTNRALIISALANSDSMLTGMLKSDDTYWCIQALKRLGVQINVQGETTSIRGIGGQWKSSSLYIGAAGTLARFLLGALAISRSGNWEIEASQSMSKRPIEPLVGVLRELGATIHYLRREGFYPLSIHGNGLAGGTVRLSGQMSSQYISGLLIAAPYADTPVTITVQGSIVQHAYVFLTLHLMKSFGAQVEYDQQLQTIVVHPTPYTCQDIDLEADASTACYFLALAALTKGRIRLNNLTASTTQPDLHMLTVFEKMGCTVTRGSSFIELEGVSQLKGGFQISMNEMSDQALTLAAIAPFADGPITITDVEHIRYHESDRIAVICEALTRLGIQVDEFEDGLTVYPGTPKPTLHPLSTYDDHRVAMSLSLIGTKVKGLRLNDPGCVAKTCPSYFQLLEQLGIQVHYQ.

Lys40, Ser41, and Arg45 together coordinate 3-phosphoshikimate. Lys40 contributes to the phosphoenolpyruvate binding site. The phosphoenolpyruvate site is built by Gly109 and Arg138. 3-phosphoshikimate-binding residues include Ser184, Ser185, Gln186, Asp329, and His356. Gln186 contacts phosphoenolpyruvate. The active-site Proton acceptor is the Asp329. Positions 360, 403, and 428 each coordinate phosphoenolpyruvate.

The protein belongs to the EPSP synthase family. As to quaternary structure, monomer.

The protein localises to the cytoplasm. It catalyses the reaction 3-phosphoshikimate + phosphoenolpyruvate = 5-O-(1-carboxyvinyl)-3-phosphoshikimate + phosphate. It participates in metabolic intermediate biosynthesis; chorismate biosynthesis; chorismate from D-erythrose 4-phosphate and phosphoenolpyruvate: step 6/7. Functionally, catalyzes the transfer of the enolpyruvyl moiety of phosphoenolpyruvate (PEP) to the 5-hydroxyl of shikimate-3-phosphate (S3P) to produce enolpyruvyl shikimate-3-phosphate and inorganic phosphate. The sequence is that of 3-phosphoshikimate 1-carboxyvinyltransferase 2 from Halalkalibacterium halodurans (strain ATCC BAA-125 / DSM 18197 / FERM 7344 / JCM 9153 / C-125) (Bacillus halodurans).